A 1195-amino-acid polypeptide reads, in one-letter code: Chromosome partition protein Smc (1195 aa).

Residue 33–40 (PNGSGKSN) coordinates ATP. Coiled coils occupy residues 185-241 (GVAQ…RQEQ), 273-348 (DAAT…IQAL), and 380-528 (QYQQ…QETQ). Residues 542-658 (PGVHGLVAQL…FERLDQARRY (117 aa)) form the SMC hinge domain. The stretch at 698-1043 (GESAEVRAIR…ELLLRIENFT (346 aa)) forms a coiled coil.

It belongs to the SMC family. In terms of assembly, homodimer.

It localises to the cytoplasm. Its function is as follows. Required for chromosome condensation and partitioning. The sequence is that of Chromosome partition protein Smc from Synechococcus sp. (strain ATCC 27144 / PCC 6301 / SAUG 1402/1) (Anacystis nidulans).